The chain runs to 659 residues: Threonine--tRNA ligase (659 aa).

A TGS domain is found at 3 to 64 (EKIRITLIDN…LEDGRLEIIT (62 aa)). The segment at 249–555 (DHRRLGQEMD…LIEHHAGRFP (307 aa)) is catalytic. Residues cysteine 354, histidine 405, and histidine 532 each contribute to the Zn(2+) site.

This sequence belongs to the class-II aminoacyl-tRNA synthetase family. Homodimer. The cofactor is Zn(2+).

Its subcellular location is the cytoplasm. It catalyses the reaction tRNA(Thr) + L-threonine + ATP = L-threonyl-tRNA(Thr) + AMP + diphosphate + H(+). Functionally, catalyzes the attachment of threonine to tRNA(Thr) in a two-step reaction: L-threonine is first activated by ATP to form Thr-AMP and then transferred to the acceptor end of tRNA(Thr). Also edits incorrectly charged L-seryl-tRNA(Thr). The polypeptide is Threonine--tRNA ligase (Zymomonas mobilis subsp. mobilis (strain ATCC 31821 / ZM4 / CP4)).